Consider the following 281-residue polypeptide: Bis(5'-nucleosyl)-tetraphosphatase, symmetrical (281 aa).

It belongs to the Ap4A hydrolase family.

The catalysed reaction is P(1),P(4)-bis(5'-adenosyl) tetraphosphate + H2O = 2 ADP + 2 H(+). In terms of biological role, hydrolyzes diadenosine 5',5'''-P1,P4-tetraphosphate to yield ADP. This is Bis(5'-nucleosyl)-tetraphosphatase, symmetrical from Delftia acidovorans (strain DSM 14801 / SPH-1).